The chain runs to 565 residues: MKLSPSKYLPVLLGTLSLTIANPSADCKCFPGDDCWPSAAEWKALNTSVSGNLIKTVPLGAPCHDPMFKGDVCQSLRQQWQNATIHFASSSSVMAPFFANQSCDPFQPRIRPCELGNYVSYAIAAETTSDVQNAIAFARANHIRLVIRNTGHDYLGRSTGAGALGVWTHHLKNIEFVDWDDDTYTGNAVKLGAGVQGFEVLEAARSRGLVVVGGECPTVGIAGGYSQGGGHSALSTSFGLSVDNVLSWEVITAKGELLTVNKDENPDLFWALRGGGGGTFGVVISMTVKAHPGTITSGASLSFSTDTNSEEAFWAGIQVFQDTLEDMVDAGTMVIHIITNTSFLIAPLTAYNKTEAQVKVIMKPFISSLTSKHVDFDVTYKESKTYYDHYNEFLGPLPYGKIRVGFEQYGGRLIPRSVVPNFTETLRQVTNMGVTWVGVATDVGPFGTRATTSVHPAWRSTLVHALLSTPWDFTKPWHDMIKLQDLMTNVIMPKVEAVTPGSGAYVNEADFRQPNYQDVFWGDNYKDLLEVKEKWDPEHFFFVPKGVGSEIWSIAEDGRMCKSAL.

An N-terminal signal peptide occupies residues 1–27; that stretch reads MKLSPSKYLPVLLGTLSLTIANPSADC. N-linked (GlcNAc...) asparagine glycosylation is found at asparagine 46, asparagine 82, and asparagine 100. Positions 115 to 293 constitute an FAD-binding PCMH-type domain; that stretch reads LGNYVSYAIA…ISMTVKAHPG (179 aa). Residues asparagine 340, asparagine 352, and asparagine 421 are each glycosylated (N-linked (GlcNAc...) asparagine).

It belongs to the oxygen-dependent FAD-linked oxidoreductase family.

It participates in mycotoxin biosynthesis. In terms of biological role, FAD-linked oxidoreductase; part of the gene cluster that mediates the biosynthesis of zearalenone (ZEA), a nonsteroid estrogen that is a contaminant of cereal grains and causes estrogenic disorders in humans and animals. The ZEA backbone is synthesized from a single acetyl-CoA molecule and eight malonyl-CoA molecules. The reducing polyketide synthase ZEA2 is proposed to synthesize a reduced hexaketide intermediate by using different combinations of its reductive domains during each round of condensation. The hexaketide thioester is then transacylated to the non-reducing polyketide synthase ZEA1 and is further condensed with three malonyl-CoAs without reductive tailoring to yield a mixed reduced/unreduced nonaketide. ZEA1 must be able to interact with ZEA2 to facilitate starter-unit acyltransfer and initiate polyketide biosynthesis. ZEA1 also mediates the required C2-C7 cyclization to form the resorcylate core and catalyzes the formation of the macrolactone. ZEB1 is then responsible for the chemical conversion of beta-zearalenonol (beta-ZOL) to ZEA in the biosynthetic pathway. In Gibberella zeae (strain ATCC MYA-4620 / CBS 123657 / FGSC 9075 / NRRL 31084 / PH-1) (Wheat head blight fungus), this protein is FAD-linked oxidoreductase ZEB1.